Reading from the N-terminus, the 305-residue chain is GTPase Era (305 aa).

The region spanning 13–181 (RCGYVAIVGR…EKLVAERLPE (169 aa)) is the Era-type G domain. The segment at 21 to 28 (GRPNVGKS) is G1. 21–28 (GRPNVGKS) serves as a coordination point for GTP. The tract at residues 47–51 (QTTRH) is G2. The segment at 68–71 (DTPG) is G3. Residues 68 to 72 (DTPGL) and 130 to 133 (NKTD) each bind GTP. Residues 130–133 (NKTD) form a G4 region. The tract at residues 160 to 162 (ISA) is G5. A KH type-2 domain is found at 204–288 (VREKIMRQLG…MLNLWVKVKG (85 aa)).

It belongs to the TRAFAC class TrmE-Era-EngA-EngB-Septin-like GTPase superfamily. Era GTPase family. Monomer.

The protein resides in the cytoplasm. The protein localises to the cell inner membrane. Functionally, an essential GTPase that binds both GDP and GTP, with rapid nucleotide exchange. Plays a role in 16S rRNA processing and 30S ribosomal subunit biogenesis and possibly also in cell cycle regulation and energy metabolism. In Pseudomonas aeruginosa (strain LESB58), this protein is GTPase Era.